The sequence spans 111 residues: Cystatin (111 aa).

Positions 3-103 (GGLSPRDVTD…CRFEVWSRPW (101 aa)) constitute a Cystatin domain. The Secondary area of contact motif lies at 47-51 (QVVSG). C65 and C81 are oxidised to a cystine.

Belongs to the cystatin family. Expressed by the venom gland.

It is found in the secreted. In terms of biological role, inhibits various C1 cysteine proteases including cathepsin L, papain and cathepsin B. This protein has no toxic activity and its function in the venom is unknown. It may play a role as housekeeping or regulatory protein. The sequence is that of Cystatin from Bitis arietans (African puff adder).